Consider the following 216-residue polypeptide: UPF0502 protein Smal_0052 (216 aa).

The protein belongs to the UPF0502 family.

This chain is UPF0502 protein Smal_0052, found in Stenotrophomonas maltophilia (strain R551-3).